The primary structure comprises 31 residues: MSDINATRLPAWLATCPCAGDDVNPLLTRGE.

The propeptide occupies 1-10 (MSDINATRLP). Residues 11-17 (AWLATCP) constitute a cross-link (cyclopeptide (Ala-Pro)). A cross-link (2'-cysteinyl-6'-hydroxytryptophan sulfoxide (Trp-Cys)) is located at residues 12–16 (WLATC). A propeptide spanning residues 18-31 (CAGDDVNPLLTRGE) is cleaved from the precursor.

This sequence belongs to the MSDIN fungal toxin family. Post-translationally, processed by the macrocyclase-peptidase enzyme POPB to yield a toxic cyclic heptapeptide. POPB first removes 10 residues from the N-terminus. Conformational trapping of the remaining peptide forces the enzyme to release this intermediate rather than proceed to macrocyclization. The enzyme rebinds the remaining peptide in a different conformation and catalyzes macrocyclization of the N-terminal 7 residues.

Its function is as follows. Major toxin that belongs to the bicyclic heptapeptides called phallotoxins. Although structurally related to amatoxins, phallotoxins have a different mode of action, which is the stabilization of F-actin. Phallotoxins are poisonous when administered parenterally, but not orally because of poor absorption. The sequence is that of Phalloidin proprotein from Amanita ocreata (Western North American destroying angel).